The chain runs to 446 residues: Tryptophan dimethylallyltransferase (446 aa).

Residues 83-84 (IL) and glutamate 92 contribute to the L-tryptophan site. Substrate-binding residues include arginine 103, lysine 189, and tyrosine 191. L-tryptophan-binding residues include tyrosine 193 and arginine 246. Substrate-binding residues include arginine 259, lysine 261, tyrosine 263, glutamine 345, and tyrosine 347.

This sequence belongs to the tryptophan dimethylallyltransferase family. In terms of assembly, homodimer.

It carries out the reaction L-tryptophan + dimethylallyl diphosphate = 4-(3-methylbut-2-enyl)-L-tryptophan + diphosphate. Its pathway is alkaloid biosynthesis; ergot alkaloid biosynthesis. Functionally, tryptophan dimethylallyltransferase; part of the gene cluster that mediates the biosynthesis of fungal ergot alkaloid. DmaW catalyzes the first step of ergot alkaloid biosynthesis by condensing dimethylallyl diphosphate (DMAP) and tryptophan to form 4-dimethylallyl-L-tryptophan. The second step is catalyzed by the methyltransferase easF that methylates 4-dimethylallyl-L-tryptophan in the presence of S-adenosyl-L-methionine, resulting in the formation of 4-dimethylallyl-L-abrine. The catalase easC and the FAD-dependent oxidoreductase easE then transform 4-dimethylallyl-L-abrine to chanoclavine-I which is further oxidized by easD in the presence of NAD(+), resulting in the formation of chanoclavine-I aldehyde. Chanoclavine-I aldehyde is the precursor of ergoamides and ergopeptines in Clavicipitaceae, and clavine-type alcaloids such as fumiclavine in Trichocomaceae. However, the metabolites downstream of chanoclavine-I aldehyde in Arthrodermataceae have not been identified yet. This is Tryptophan dimethylallyltransferase from Arthroderma otae (strain ATCC MYA-4605 / CBS 113480) (Microsporum canis).